Reading from the N-terminus, the 635-residue chain is Threonine--tRNA ligase (635 aa).

Residues 1 to 61 enclose the TGS domain; that stretch reads MINISFPDGS…ENDCKLRILT (61 aa). The catalytic stretch occupies residues 242–533; that stretch reads DHRKLGKELD…LIEEYAGCFP (292 aa). Zn(2+) is bound by residues C333, H384, and H510.

This sequence belongs to the class-II aminoacyl-tRNA synthetase family. As to quaternary structure, homodimer. Requires Zn(2+) as cofactor.

It localises to the cytoplasm. It catalyses the reaction tRNA(Thr) + L-threonine + ATP = L-threonyl-tRNA(Thr) + AMP + diphosphate + H(+). Catalyzes the attachment of threonine to tRNA(Thr) in a two-step reaction: L-threonine is first activated by ATP to form Thr-AMP and then transferred to the acceptor end of tRNA(Thr). Also edits incorrectly charged L-seryl-tRNA(Thr). This chain is Threonine--tRNA ligase, found in Rickettsia akari (strain Hartford).